Consider the following 790-residue polypeptide: Accumulates dyads protein 3 (790 aa).

The disordered stretch occupies residues 8 to 122 (LNKPESLKEQ…NTLKSPNKFL (115 aa)). The segment covering 39 to 49 (PESKPFRERRS) has biased composition (basic and acidic residues). Polar residues-rich tracts occupy residues 50-78 (QTWI…ISKL) and 89-108 (ESWA…TLEN). Coiled-coil stretches lie at residues 241 to 328 (ISKE…REEK), 361 to 430 (LVSE…RLND), 477 to 498 (KNLE…LEKN), and 540 to 658 (QQFR…LKKL).

Interacts directly with SSP1. Probable component of a SPB complex composed of ADY3, SSP1, DON1, MPC54, SPO21/MPC70, NUD1 and CNM67. In terms of processing, phosphorylated.

It is found in the prospore membrane. Its subcellular location is the cytoplasm. The protein resides in the cytoskeleton. The protein localises to the microtubule organizing center. It localises to the spindle pole body. Its function is as follows. Involved in the pathway that organizes the prospore membrane (PSM) during sporulation. Mediates the assembly of the DON1 ring structure at the leading edge of PSM during meiosis II. May constitute a physical link between SSP1-containing PSM precursors and the spindle pole body (SPB) and may facilitate the recruitment of other factors that are required to promote spore wall formation. In Saccharomyces cerevisiae (strain ATCC 204508 / S288c) (Baker's yeast), this protein is Accumulates dyads protein 3 (ADY3).